The primary structure comprises 448 residues: Glucose-6-phosphate isomerase (448 aa).

Catalysis depends on Glu-290, which acts as the Proton donor. Catalysis depends on residues His-311 and Lys-425.

Belongs to the GPI family.

The protein resides in the cytoplasm. It catalyses the reaction alpha-D-glucose 6-phosphate = beta-D-fructose 6-phosphate. The protein operates within carbohydrate biosynthesis; gluconeogenesis. It participates in carbohydrate degradation; glycolysis; D-glyceraldehyde 3-phosphate and glycerone phosphate from D-glucose: step 2/4. Its function is as follows. Catalyzes the reversible isomerization of glucose-6-phosphate to fructose-6-phosphate. The polypeptide is Glucose-6-phosphate isomerase (Latilactobacillus sakei subsp. sakei (strain 23K) (Lactobacillus sakei subsp. sakei)).